The primary structure comprises 79 residues: MSNMMNKFAEKLQGNDDSHQKGKNAKSSNKERDDMNMDMGMGHDQSEGGMKMGHDQSGTKMNAGRGIANDWKTYENMKK.

The interval 1 to 79 (MSNMMNKFAE…DWKTYENMKK (79 aa)) is disordered. The span at 8–20 (FAEKLQGNDDSHQ) shows a compositional bias: basic and acidic residues.

The chain is Protein SIP18 (SIP18) from Saccharomyces cerevisiae (strain ATCC 204508 / S288c) (Baker's yeast).